A 129-amino-acid chain; its full sequence is Small ribosomal subunit protein uS8my (129 aa).

Belongs to the universal ribosomal protein uS8 family. In terms of assembly, component of the mitochondrial ribosome small subunit.

The protein localises to the mitochondrion. The sequence is that of Small ribosomal subunit protein uS8my (RPS15AE) from Arabidopsis thaliana (Mouse-ear cress).